The following is a 185-amino-acid chain: TRAF-interacting protein with FHA domain-containing protein A (185 aa).

Residue threonine 9 is modified to Phosphothreonine. Positions 48 to 104 (VKFGRNSNMCQYTFQDKQVSRVQFALQPFKQFNSSVLSFEIKNMSKKTSLMVDNQEL) constitute an FHA domain.

The protein belongs to the TIFA family. As to quaternary structure, homooligomer; homooligomerizes following phosphorylation at Thr-9. Interacts with IRAK1, TRAF2 and TRAF6. Interacts with TIFAB; binding to TIFAB inhibits TRAF6 activation, possibly by inducing a conformational change in TIFA. Interacts with ZCCHC11; binding to ZCCHC11 suppresses the TRAF6-dependent activation of NF-kappa-B. In terms of processing, phosphorylated at Thr-9 following detection of ADP-D-glycero-beta-D-manno-heptose (ADP-Heptose) by ALPK1. Phosphorylation at Thr-9 by ALPK1 leads to the formation of an intermolecular binding between the FHA domain and phosphorylated Thr-9, promoting TIFA oligomerization and TIFA-mediated NF-kappa-B activation.

It localises to the cytoplasm. Adapter molecule that plays a key role in the activation of pro-inflammatory NF-kappa-B signaling following detection of bacterial pathogen-associated molecular pattern metabolites (PAMPs). Promotes activation of an innate immune response by inducing the oligomerization and polyubiquitination of TRAF6, which leads to the activation of TAK1 and IKK through a proteasome-independent mechanism. TIFA-dependent innate immune response is triggered by ADP-D-glycero-beta-D-manno-heptose (ADP-Heptose), a potent PAMP present in all Gram-negative and some Gram-positive bacteria: ADP-Heptose is recognized by ALPK1, which phosphorylates TIFA at Thr-9, leading to TIFA homooligomerization and subsequent activation of pro-inflammatory NF-kappa-B signaling. In Rattus norvegicus (Rat), this protein is TRAF-interacting protein with FHA domain-containing protein A.